Consider the following 541-residue polypeptide: Membrane protein insertase YidC (541 aa).

A run of 5 helical transmembrane segments spans residues 6–26 (FFLI…WEIT), 356–376 (IIHS…LAFY), 430–450 (LPIL…LEMV), 463–483 (LSAP…MFIQ), and 498–518 (IMMA…SGLV).

This sequence belongs to the OXA1/ALB3/YidC family. Type 1 subfamily. As to quaternary structure, interacts with the Sec translocase complex via SecD. Specifically interacts with transmembrane segments of nascent integral membrane proteins during membrane integration.

The protein resides in the cell inner membrane. Functionally, required for the insertion and/or proper folding and/or complex formation of integral membrane proteins into the membrane. Involved in integration of membrane proteins that insert both dependently and independently of the Sec translocase complex, as well as at least some lipoproteins. Aids folding of multispanning membrane proteins. The protein is Membrane protein insertase YidC of Vesicomyosocius okutanii subsp. Calyptogena okutanii (strain HA).